Reading from the N-terminus, the 460-residue chain is uncharacterized protein (460 aa).

The TRAM domain occupies P6–D64. [4Fe-4S] cluster-binding residues include C77, C83, C86, and C166. The S-adenosyl-L-methionine site is built by Q290, Y319, E340, and D388. Catalysis depends on C415, which acts as the Nucleophile.

It belongs to the class I-like SAM-binding methyltransferase superfamily. RNA M5U methyltransferase family.

This is an uncharacterized protein from Clostridium acetobutylicum (strain ATCC 824 / DSM 792 / JCM 1419 / IAM 19013 / LMG 5710 / NBRC 13948 / NRRL B-527 / VKM B-1787 / 2291 / W).